Here is a 279-residue protein sequence, read N- to C-terminus: Undecaprenyl-diphosphatase (279 aa).

A run of 8 helical transmembrane segments spans residues 2–22 (LIIE…TEWL), 44–64 (AFIE…VMLI), 85–105 (WQLW…AVPL), 113–133 (FYFM…FIWI), 163–183 (VLSI…AIIL), 188–208 (TVAA…YSGL), 223–243 (AQVL…LLAI), and 255–275 (FTIF…YSFF).

It belongs to the UppP family.

The protein resides in the cell membrane. The catalysed reaction is di-trans,octa-cis-undecaprenyl diphosphate + H2O = di-trans,octa-cis-undecaprenyl phosphate + phosphate + H(+). Functionally, catalyzes the dephosphorylation of undecaprenyl diphosphate (UPP). Confers resistance to bacitracin. The polypeptide is Undecaprenyl-diphosphatase (Streptococcus pyogenes serotype M2 (strain MGAS10270)).